Reading from the N-terminus, the 313-residue chain is Probable lysophospholipase L2 (313 aa).

It localises to the cell inner membrane. The catalysed reaction is a 1-acyl-sn-glycero-3-phosphocholine + H2O = sn-glycerol 3-phosphocholine + a fatty acid + H(+). This is Probable lysophospholipase L2 (pldB) from Haemophilus influenzae (strain ATCC 51907 / DSM 11121 / KW20 / Rd).